The following is a 194-amino-acid chain: Molybdenum cofactor guanylyltransferase (194 aa).

Residues 12-14 (LAG), lysine 25, asparagine 53, aspartate 70, and aspartate 100 contribute to the GTP site. Residue aspartate 100 participates in Mg(2+) binding.

The protein belongs to the MobA family. Monomer. Requires Mg(2+) as cofactor.

It localises to the cytoplasm. It catalyses the reaction Mo-molybdopterin + GTP + H(+) = Mo-molybdopterin guanine dinucleotide + diphosphate. In terms of biological role, transfers a GMP moiety from GTP to Mo-molybdopterin (Mo-MPT) cofactor (Moco or molybdenum cofactor) to form Mo-molybdopterin guanine dinucleotide (Mo-MGD) cofactor. This is Molybdenum cofactor guanylyltransferase from Aliivibrio fischeri (strain ATCC 700601 / ES114) (Vibrio fischeri).